A 568-amino-acid chain; its full sequence is Phenylalanine--tRNA ligase beta subunit (568 aa).

Residues 278-353 enclose the B5 domain; it reads LTPKSFEVEL…IAYGYNEIEP (76 aa). Positions 331, 337, 340, and 341 each coordinate Mg(2+).

This sequence belongs to the phenylalanyl-tRNA synthetase beta subunit family. Type 2 subfamily. In terms of assembly, tetramer of two alpha and two beta subunits. It depends on Mg(2+) as a cofactor.

The protein resides in the cytoplasm. It catalyses the reaction tRNA(Phe) + L-phenylalanine + ATP = L-phenylalanyl-tRNA(Phe) + AMP + diphosphate + H(+). The sequence is that of Phenylalanine--tRNA ligase beta subunit from Thermococcus gammatolerans (strain DSM 15229 / JCM 11827 / EJ3).